Reading from the N-terminus, the 131-residue chain is Agouti-related protein (131 aa).

A signal peptide spans 1–20 (MLTAMLLSCVLLLALPPTLG). Residues 21-81 (VQMGVAPLKG…VLDPQNRESR (61 aa)) constitute a propeptide that is removed on maturation. Cystine bridges form between Cys86–Cys101, Cys93–Cys107, Cys100–Cys118, Cys104–Cys128, and Cys109–Cys116. One can recognise an Agouti domain in the interval 86 to 128 (CVRLHESCLGQQVPCCDPCATCYCRFFNAFCYCRKLGTATNLC). The segment at 110-112 (RFF) is interaction with melanocortin receptors.

In terms of assembly, interacts with melanocortin receptors MC3R, MC4R and MC5R. As to expression, expressed in arcuate nucleus and median eminence, adrenal gland (medulla), hypothalamus, testis, and lung.

The protein resides in the secreted. It is found in the golgi apparatus lumen. Plays a role in weight homeostasis. Involved in the control of feeding behavior through the central melanocortin system. Acts as alpha melanocyte-stimulating hormone antagonist by inhibiting cAMP production mediated by stimulation of melanocortin receptors within the hypothalamus and adrenal gland. Has very low activity with MC5R. Is an inverse agonist for MC3R and MC4R being able to suppress their constitutive activity. It promotes MC3R and MC4R endocytosis in an arrestin-dependent manner. The chain is Agouti-related protein (Agrp) from Mus musculus (Mouse).